The primary structure comprises 349 residues: S-adenosylmethionine:tRNA ribosyltransferase-isomerase (349 aa).

Belongs to the QueA family. As to quaternary structure, monomer.

It is found in the cytoplasm. The catalysed reaction is 7-aminomethyl-7-carbaguanosine(34) in tRNA + S-adenosyl-L-methionine = epoxyqueuosine(34) in tRNA + adenine + L-methionine + 2 H(+). It functions in the pathway tRNA modification; tRNA-queuosine biosynthesis. Functionally, transfers and isomerizes the ribose moiety from AdoMet to the 7-aminomethyl group of 7-deazaguanine (preQ1-tRNA) to give epoxyqueuosine (oQ-tRNA). The protein is S-adenosylmethionine:tRNA ribosyltransferase-isomerase of Azotobacter vinelandii (strain DJ / ATCC BAA-1303).